Consider the following 189-residue polypeptide: Peptidyl-tRNA hydrolase (189 aa).

His14 is a tRNA binding site. The active-site Proton acceptor is His19. TRNA-binding residues include Tyr64, Asn66, and Asn112.

This sequence belongs to the PTH family. Monomer.

It is found in the cytoplasm. The enzyme catalyses an N-acyl-L-alpha-aminoacyl-tRNA + H2O = an N-acyl-L-amino acid + a tRNA + H(+). In terms of biological role, hydrolyzes ribosome-free peptidyl-tRNAs (with 1 or more amino acids incorporated), which drop off the ribosome during protein synthesis, or as a result of ribosome stalling. Functionally, catalyzes the release of premature peptidyl moieties from peptidyl-tRNA molecules trapped in stalled 50S ribosomal subunits, and thus maintains levels of free tRNAs and 50S ribosomes. The polypeptide is Peptidyl-tRNA hydrolase (Chlorobium phaeobacteroides (strain BS1)).